Reading from the N-terminus, the 356-residue chain is Protein-glutamate methylesterase/protein-glutamine glutaminase 4 (356 aa).

A Response regulatory domain is found at 15–132 (RVLVVDDSAV…SVGEMTADLV (118 aa)). D66 bears the 4-aspartylphosphate mark. One can recognise a CheB-type methylesterase domain in the interval 162-348 (ARTTLQVVAI…PLDRIAPEIL (187 aa)). Active-site residues include S174, H200, and D296.

Belongs to the CheB family. In terms of processing, phosphorylated by CheA. Phosphorylation of the N-terminal regulatory domain activates the methylesterase activity.

The protein localises to the cytoplasm. The enzyme catalyses [protein]-L-glutamate 5-O-methyl ester + H2O = L-glutamyl-[protein] + methanol + H(+). It catalyses the reaction L-glutaminyl-[protein] + H2O = L-glutamyl-[protein] + NH4(+). Its function is as follows. Involved in chemotaxis. Part of a chemotaxis signal transduction system that modulates chemotaxis in response to various stimuli. Catalyzes the demethylation of specific methylglutamate residues introduced into the chemoreceptors (methyl-accepting chemotaxis proteins or MCP) by CheR. Also mediates the irreversible deamidation of specific glutamine residues to glutamic acid. The protein is Protein-glutamate methylesterase/protein-glutamine glutaminase 4 of Anaeromyxobacter dehalogenans (strain 2CP-C).